The primary structure comprises 194 residues: Amidophosphoribosyltransferase (194 aa).

A propeptide spanning residues 1–11 is cleaved from the precursor; it reads MPHEPKGLNEE. Cys-12 (nucleophile) is an active-site residue. Residues 12-194 enclose the Glutamine amidotransferase type-2 domain; that stretch reads CGVFGVWGNP…PHGFRPMVVG (183 aa).

It in the C-terminal section; belongs to the purine/pyrimidine phosphoribosyltransferase family.

It carries out the reaction 5-phospho-beta-D-ribosylamine + L-glutamate + diphosphate = 5-phospho-alpha-D-ribose 1-diphosphate + L-glutamine + H2O. It participates in purine metabolism; IMP biosynthesis via de novo pathway; N(1)-(5-phospho-D-ribosyl)glycinamide from 5-phospho-alpha-D-ribose 1-diphosphate: step 1/2. Functionally, catalyzes the formation of phosphoribosylamine from phosphoribosylpyrophosphate (PRPP) and glutamine. The chain is Amidophosphoribosyltransferase from Lacticaseibacillus casei (Lactobacillus casei).